The sequence spans 83 residues: U5-theraphotoxin-Hs1b 2 (83 aa).

The signal sequence occupies residues 1–21 (MQTSMFLTLTGLVLLFVVCYA). The propeptide occupies 22 to 49 (SESEEKEFPKELLSSIFAADSDFKEEER). Cystine bridges form between Cys51–Cys63, Cys56–Cys68, and Cys62–Cys75.

This sequence belongs to the neurotoxin 10 (Hwtx-1) family. 51 (Hntx-8) subfamily. Hntx-8 sub-subfamily. In terms of tissue distribution, expressed by the venom gland.

It localises to the secreted. Its function is as follows. Agglutinates erythrocytes. The protein is U5-theraphotoxin-Hs1b 2 of Cyriopagopus schmidti (Chinese bird spider).